The chain runs to 143 residues: Large ribosomal subunit protein uL15 (143 aa).

The tract at residues M1 to P56 is disordered. Gly residues predominate over residues R21–A31.

This sequence belongs to the universal ribosomal protein uL15 family. As to quaternary structure, part of the 50S ribosomal subunit.

In terms of biological role, binds to the 23S rRNA. The sequence is that of Large ribosomal subunit protein uL15 from Delftia acidovorans (strain DSM 14801 / SPH-1).